The primary structure comprises 272 residues: Insulin-like growth factor-binding protein 1 (272 aa).

The N-terminal stretch at 1 to 25 is a signal peptide; it reads MPEVPAAGLWPFLLLLAVQVSTVAS. The IGFBP N-terminal domain occupies 28–109; sequence QPWHCAPCSA…TRGQGACVPE (82 aa). Cystine bridges form between cysteine 32–cysteine 59, cysteine 35–cysteine 61, cysteine 43–cysteine 62, cysteine 50–cysteine 65, and cysteine 73–cysteine 86. Serine 139, serine 157, and serine 169 each carry phosphoserine. Phosphothreonine is present on threonine 170. Position 171 is a phosphotyrosine (tyrosine 171). Residues 186–264 form the Thyroglobulin type-1 domain; the sequence is KQPCRRELYK…SLEIRGDPNC (79 aa). Intrachain disulfides connect cysteine 189–cysteine 219, cysteine 230–cysteine 241, and cysteine 243–cysteine 264. Serine 255 bears the Phosphoserine mark. The short motif at 259–261 is the Cell attachment site element; that stretch reads RGD.

Binds equally well IGF1 and IGF2. Interacts with integrin ITGA5:ITGB1. Interacts with VHL; this interaction inhibits HIF1A degradation.

The protein resides in the secreted. In terms of biological role, multifunctional protein that plays a critical role in regulating the availability of IGFs such as IGF1 and IGF2 to their receptors and thereby regulates IGF-mediated cellular processes including cell migration, proliferation, differentiation or apoptosis in a cell-type specific manner. Also plays a positive role in cell migration by interacting with integrin ITGA5:ITGB1 through its RGD motif. Mechanistically, binding to integrins leads to activation of focal adhesion kinase/PTK2 and stimulation of the mitogen-activated protein kinase (MAPK) pathway. Regulates cardiomyocyte apoptosis by suppressing HIF-1alpha/HIF1A degradation through ubiquitination. This Ictidomys tridecemlineatus (Thirteen-lined ground squirrel) protein is Insulin-like growth factor-binding protein 1 (IGFBP1).